Here is a 136-residue protein sequence, read N- to C-terminus: Large ribosomal subunit protein uL16 (136 aa).

It belongs to the universal ribosomal protein uL16 family. Part of the 50S ribosomal subunit.

In terms of biological role, binds 23S rRNA and is also seen to make contacts with the A and possibly P site tRNAs. The chain is Large ribosomal subunit protein uL16 from Yersinia enterocolitica serotype O:8 / biotype 1B (strain NCTC 13174 / 8081).